We begin with the raw amino-acid sequence, 59 residues long: Large ribosomal subunit protein bL32 (59 aa).

The disordered stretch occupies residues 1–59 (MAVQQNKKSPSKRGMHRSHDALTAPALSVDSTTGEVHRPHHISPNGMYRGRKVVKVKGE). The span at 49 to 59 (RGRKVVKVKGE) shows a compositional bias: basic residues.

This sequence belongs to the bacterial ribosomal protein bL32 family.

This is Large ribosomal subunit protein bL32 (rpmF) from Neisseria meningitidis serogroup A / serotype 4A (strain DSM 15465 / Z2491).